The sequence spans 381 residues: MNQFTLPVWVVAAAKSATNILIGNKFRDKERIDLPNKEESISVPISSSALLDNGKRSLAVSHCQSGLPLDITRGVEIWAYIQLSKGSSQSKGKVQNGFPDWLDFHAGCGVGKFQSSGQPCISQFARDLLCINLYPLVPKGNSIKVEIILPEGKDRASKTSNEAFGVVDGLSLIGTQAEVQISASPDQLKNCKEILYHKCSEAKFDGCLTFVIGENGMDLAMKYGLPANQIIKTGNWLGPLLVAAAENGVKKLLLFGYHGKLIKLSGGVFHTHHHLADGRIEILTSLAFREGISFDLIELISKSTSVENALLTLEVSNPDAVSLIWSRMAKEIEIKSRSYVNRYLSSSMEIGSVLFDRKRQMRWAGLEGLKQINSLGLILKR.

Belongs to the CbiD family.

It catalyses the reaction Co-precorrin-5B + S-adenosyl-L-methionine = Co-precorrin-6A + S-adenosyl-L-homocysteine. It participates in cofactor biosynthesis; adenosylcobalamin biosynthesis; cob(II)yrinate a,c-diamide from sirohydrochlorin (anaerobic route): step 6/10. Catalyzes the methylation of C-1 in cobalt-precorrin-5B to form cobalt-precorrin-6A. The protein is Cobalt-precorrin-5B C(1)-methyltransferase of Prochlorococcus marinus (strain NATL1A).